Reading from the N-terminus, the 409-residue chain is Arginine biosynthesis bifunctional protein ArgJ (409 aa).

Substrate is bound by residues T156, K182, T193, E280, N404, and S409. T193 acts as the Nucleophile in catalysis.

This sequence belongs to the ArgJ family. Heterotetramer of two alpha and two beta chains.

Its subcellular location is the cytoplasm. The catalysed reaction is N(2)-acetyl-L-ornithine + L-glutamate = N-acetyl-L-glutamate + L-ornithine. It catalyses the reaction L-glutamate + acetyl-CoA = N-acetyl-L-glutamate + CoA + H(+). It participates in amino-acid biosynthesis; L-arginine biosynthesis; L-ornithine and N-acetyl-L-glutamate from L-glutamate and N(2)-acetyl-L-ornithine (cyclic): step 1/1. The protein operates within amino-acid biosynthesis; L-arginine biosynthesis; N(2)-acetyl-L-ornithine from L-glutamate: step 1/4. Catalyzes two activities which are involved in the cyclic version of arginine biosynthesis: the synthesis of N-acetylglutamate from glutamate and acetyl-CoA as the acetyl donor, and of ornithine by transacetylation between N(2)-acetylornithine and glutamate. This chain is Arginine biosynthesis bifunctional protein ArgJ, found in Ralstonia nicotianae (strain ATCC BAA-1114 / GMI1000) (Ralstonia solanacearum).